The following is a 523-amino-acid chain: SWI/SNF and RSC complexes subunit arp9 (523 aa).

A compositionally biased stretch (basic and acidic residues) spans 56–72 (INMEDPNVKTDETKVET). Disordered stretches follow at residues 56 to 92 (INME…KNMG) and 319 to 339 (QKER…NTDV). Positions 79–92 (QPSNSNVTEEKNMG) are enriched in polar residues. Residues 319–336 (QKEREKNGESEKDEKPDN) are compositionally biased toward basic and acidic residues.

The protein belongs to the actin family. Component of the RSC complex composed of at least arp9, arp42, rsc1, rsc4, rsc7, rsc9, rsc58, sfh1, snf21, ssr1, ssr2, ssr3 and ssr4. The complex interacts with histone and histone variant components of centromeric chromatin. Component of the SWI/SNF global transcription activator complex composed of at least arp9, arp42, snf5, snf22, snf30, sbf59, sol1, ssr1, ssr2, ssr3, ssr4 and tfg3.

It is found in the cytoplasm. Its subcellular location is the nucleus. In terms of biological role, component of the chromatin structure remodeling complex (RSC), which is involved in transcription regulation and nucleosome positioning. Controls particularly membrane and organelle development genes. Part of the SWI/SNF complex, an ATP-dependent chromatin remodeling complex, required for the positive and negative regulation of gene expression of a large number of genes. It changes chromatin structure by altering DNA-histone contacts within a nucleosome, leading eventually to a change in nucleosome position, thus facilitating or repressing binding of gene-specific transcription factors. The protein is SWI/SNF and RSC complexes subunit arp9 (arp9) of Schizosaccharomyces pombe (strain 972 / ATCC 24843) (Fission yeast).